A 986-amino-acid chain; its full sequence is Epidermin biosynthesis protein EpiB (986 aa).

To B.subtilis SpaB and L.lactis NisB.

It is found in the cell membrane. Functionally, involved in the post-translational modification of the lantibiotic epidermin. This is Epidermin biosynthesis protein EpiB (epiB) from Staphylococcus epidermidis.